A 315-amino-acid chain; its full sequence is COMPASS component SWD3 (315 aa).

WD repeat units lie at residues 53-93 (SHAR…HTFI), 94-133 (GHTAPVISLTFNRKGNLLFTSSMDESIKIWDTLNGSLMKT), 136-178 (AHSE…KTLT), 187-228 (NGVV…RTFQ), 238-278 (HHSC…LLQL), and 285-315 (HHSSPVMSIHCFGNIMCSLALNGDCCLWRWV).

As to quaternary structure, component of the Set1C/COMPASS complex which consists of SET1(2), BRE2(2), SPP1(2), SDC1(1), SHG1(1), SWD1(1), SWD2(1), and SWD3(1).

Its subcellular location is the nucleus. The protein localises to the chromosome. It is found in the telomere. In terms of biological role, the COMPASS (Set1C) complex specifically mono-, di- and trimethylates histone H3 to form H3K4me1/2/3, which subsequently plays a role in telomere length maintenance and transcription elongation regulation. COMPASS recognizes ubiquitinated H2B on one face of the nucleosome which stimulates the methylation of H3 on the opposing face. SWD3/CPS30 establishes COMPASS trimethylation activity and may also serve as the anchor point to properly tether and space the other subunits. This Saccharomyces cerevisiae (strain ATCC 204508 / S288c) (Baker's yeast) protein is COMPASS component SWD3.